The chain runs to 433 residues: MGFHIYEIKARQIIDSRGNPTVEADVILEDGTYGRAAVPSGASTGINEAVELRDGDKSVYMGKGVLKAIENIKNIIAPELEGMSALNQVAIDRKMLELDGTPTKEKLGANAILAVSMATAKAAAKYLGLRPYQYLGAYKANILPTPMCNIINGGAHSDNSVDFQEFMIMPIGAKTFSEAIRMAAEVFHTLKGILSGKGYATSVGDEGGFAPNLKSNEEACEVIIEAIKKAGYEPGKDIAIALDPATSELYDPKTKKYVLKWSTKEKLTSEQMVEYWAKWVEKYPIISIEDGMAEEDWDGWKKLTDKIGNKIQLVGDDLFVTNTSFLKKGIEMGVANSILIKVNQIGTLTETFEAVEMAKKAGYTAIVSHRSGETEDTTIADLVVALGTGQIKTGSLSRTDRIAKYNQLIRIEEELETTAEYHGKSVFYSIKQK.

Residue Gln-164 participates in (2R)-2-phosphoglycerate binding. The active-site Proton donor is the Glu-206. Mg(2+) contacts are provided by Asp-243, Glu-289, and Asp-316. Positions 341, 370, 371, and 392 each coordinate (2R)-2-phosphoglycerate. Lys-341 functions as the Proton acceptor in the catalytic mechanism.

It belongs to the enolase family. The cofactor is Mg(2+).

The protein resides in the cytoplasm. Its subcellular location is the secreted. It localises to the cell surface. It carries out the reaction (2R)-2-phosphoglycerate = phosphoenolpyruvate + H2O. Its pathway is carbohydrate degradation; glycolysis; pyruvate from D-glyceraldehyde 3-phosphate: step 4/5. In terms of biological role, catalyzes the reversible conversion of 2-phosphoglycerate (2-PG) into phosphoenolpyruvate (PEP). It is essential for the degradation of carbohydrates via glycolysis. This is Enolase from Borreliella burgdorferi (strain ATCC 35210 / DSM 4680 / CIP 102532 / B31) (Borrelia burgdorferi).